Here is a 347-residue protein sequence, read N- to C-terminus: tRNA N6-adenosine threonylcarbamoyltransferase (347 aa).

Fe cation is bound by residues histidine 113 and histidine 117. Substrate contacts are provided by residues 136-140, aspartate 170, glycine 183, aspartate 187, and asparagine 282; that span reads IVSGG. Residue aspartate 310 coordinates Fe cation.

It belongs to the KAE1 / TsaD family. Fe(2+) serves as cofactor.

The protein localises to the cytoplasm. The enzyme catalyses L-threonylcarbamoyladenylate + adenosine(37) in tRNA = N(6)-L-threonylcarbamoyladenosine(37) in tRNA + AMP + H(+). In terms of biological role, required for the formation of a threonylcarbamoyl group on adenosine at position 37 (t(6)A37) in tRNAs that read codons beginning with adenine. Is involved in the transfer of the threonylcarbamoyl moiety of threonylcarbamoyl-AMP (TC-AMP) to the N6 group of A37, together with TsaE and TsaB. TsaD likely plays a direct catalytic role in this reaction. The chain is tRNA N6-adenosine threonylcarbamoyltransferase from Bifidobacterium adolescentis (strain ATCC 15703 / DSM 20083 / NCTC 11814 / E194a).